Here is a 333-residue protein sequence, read N- to C-terminus: Torsin-1A (333 aa).

The signal sequence occupies residues 1–20 (MKLGRATLALLLLVPCVVRA). The interval 92–252 (KPKKPLTLSL…VSVFNNKNSG (161 aa)) is interaction with SNAPIN. Residues Asn144 and Asn159 are each glycosylated (N-linked (GlcNAc...) asparagine). The interval 252–333 (GFWHSSLIDR…FTKLDYYLDD (82 aa)) is interaction with KLC1. Residues 313-333 (KVFSDKGCKTVFTKLDYYLDD) are interaction with SYNE3.

Belongs to the ClpA/ClpB family. Torsin subfamily. Homohexamer. Interacts with TOR1B; the interaction may be specific of neural tissues. Interacts (ATP-bound) with TOR1AIP1 and TOR1AIP2; the interactions induce ATPase activity. Interacts with KLHL14; preferentially when ATP-free. Interacts with KLC1 (via TPR repeats); the interaction associates TOR1A with the kinesin oligomeric complex. Interacts with COPS4; the interaction associates TOR1A with the CSN complex. Interacts with SNAPIN; the interaction is direct and associates SNAPIN with the CSN complex. Interacts with STON2. Interacts (ATP-bound) with SYNE3 (via KASH domain); the interaction is required for SYNE3 nuclear envelope localization. Interacts with VIM; the interaction associates TOR1A with the cytoskeleton. Interacts with PLEC. Interacts (ATP-bound) with SLC6A3; regulates SLC6A3 transport to the plasma membrane. In terms of processing, N-glycosylated. Expressed in brain (at protein level).

The protein localises to the endoplasmic reticulum lumen. Its subcellular location is the nucleus inner membrane. It localises to the cell projection. It is found in the growth cone. The protein resides in the cytoplasmic vesicle membrane. The protein localises to the cytoplasmic vesicle. Its subcellular location is the secretory vesicle. It localises to the synaptic vesicle. It carries out the reaction ATP + H2O = ADP + phosphate + H(+). Protein with chaperone functions important for the control of protein folding, processing, stability and localization as well as for the reduction of misfolded protein aggregates. Involved in the regulation of synaptic vesicle recycling, controls STON2 protein stability in collaboration with the COP9 signalosome complex (CSN). In the nucleus, may link the cytoskeleton with the nuclear envelope, this mechanism seems to be crucial for the control of nuclear polarity, cell movement and, specifically in neurons, nuclear envelope integrity. Participates in the cellular trafficking and may regulate the subcellular location of multipass membrane proteins such as the dopamine transporter SLC6A3, leading to the modulation of dopamine neurotransmission. In the endoplasmic reticulum, plays a role in the quality control of protein folding by increasing clearance of misfolded proteins such as SGCE variants or holding them in an intermediate state for proper refolding. May have a redundant function with TOR1B in non-neural tissues. This is Torsin-1A (Tor1a) from Rattus norvegicus (Rat).